The sequence spans 200 residues: Bombinin-like peptides 3 (200 aa).

A signal peptide (or 18) is located at residues 1–16 (MNFKYIVAVSILIASA). Phenylalanine amide is present on residues Phe68 and Phe129.

This sequence belongs to the bombinin family. Expressed by the skin glands.

Its subcellular location is the secreted. Its function is as follows. Has antimicrobial activity, but no hemolytic activity. Preference on killing Gram-negative non-enteric bacteria. The polypeptide is Bombinin-like peptides 3 (Bombina orientalis (Oriental fire-bellied toad)).